The following is a 424-amino-acid chain: Dihydroorotase (424 aa).

The Zn(2+) site is built by histidine 61 and histidine 63. Substrate-binding positions include histidine 63 to arginine 65 and asparagine 95. Zn(2+) is bound by residues aspartate 153, histidine 180, and histidine 233. Asparagine 279 serves as a coordination point for substrate. Position 306 (aspartate 306) interacts with Zn(2+). Aspartate 306 is an active-site residue. Histidine 310 is a binding site for substrate.

It belongs to the metallo-dependent hydrolases superfamily. DHOase family. Class I DHOase subfamily. Zn(2+) serves as cofactor.

It catalyses the reaction (S)-dihydroorotate + H2O = N-carbamoyl-L-aspartate + H(+). It participates in pyrimidine metabolism; UMP biosynthesis via de novo pathway; (S)-dihydroorotate from bicarbonate: step 3/3. Functionally, catalyzes the reversible cyclization of carbamoyl aspartate to dihydroorotate. This Pelobacter propionicus (strain DSM 2379 / NBRC 103807 / OttBd1) protein is Dihydroorotase.